The sequence spans 606 residues: NADH-ubiquinone oxidoreductase chain 5 (606 aa).

15 helical membrane-spanning segments follow: residues 4–24, 43–63, 87–107, 117–137, 140–160, 171–191, 213–233, 241–261, 272–292, 310–330, 366–386, 413–433, 457–477, 482–502, and 582–602; these read FSSL…MMSL, AFIT…ELII, MMFT…SMWY, FFKY…ANNL, LFIG…WWYG, AVLY…WFLT, LIGL…HPWL, TPVS…FLLI, FIQS…AMCA, LGLM…LHIC, MPFT…MPFL, LIAT…ALLG, LLIG…PTTI, MPYY…ILAL, and GLIK…MMLF.

As to quaternary structure, core subunit of respiratory chain NADH dehydrogenase (Complex I) which is composed of 45 different subunits.

The protein resides in the mitochondrion inner membrane. The enzyme catalyses a ubiquinone + NADH + 5 H(+)(in) = a ubiquinol + NAD(+) + 4 H(+)(out). Functionally, core subunit of the mitochondrial membrane respiratory chain NADH dehydrogenase (Complex I) which catalyzes electron transfer from NADH through the respiratory chain, using ubiquinone as an electron acceptor. Essential for the catalytic activity and assembly of complex I. In Bos indicus (Zebu), this protein is NADH-ubiquinone oxidoreductase chain 5 (MT-ND5).